A 203-amino-acid chain; its full sequence is Tic20 family protein Ycf60 (203 aa).

Helical transmembrane passes span 2–22, 51–71, 84–104, 131–151, and 153–173; these read IRLFTFAIITVFLIVISRLAL, TVPYYLPLFEGLQNFGQYVLP, IILPMLIFYMNHAILGLVTFF, ILLFLVGSLFGAVFRAFPIEF, and ISFLGLMVCNMMFWFVLSTIT.

It belongs to the Tic20 family.

The protein localises to the plastid. The protein resides in the chloroplast membrane. This chain is Tic20 family protein Ycf60 (ycf60), found in Pyropia yezoensis (Susabi-nori).